The primary structure comprises 467 residues: Chromosomal replication initiator protein DnaA (467 aa).

The segment at 1–90 (MSLSLWQQCL…KPVTQTPQAA (90 aa)) is domain I, interacts with DnaA modulators. The segment at 91-130 (VTSNVAAPAQVAQTQPQRAAPSMRSGWDNVPAPAEPTYRS) is domain II. Residues 131 to 347 (NVNVKHTFDN…GALNRVIANA (217 aa)) form a domain III, AAA+ region region. 4 residues coordinate ATP: Gly175, Gly177, Lys178, and Thr179. Residues 348–467 (NFTGRAITID…FSNLIRTLSS (120 aa)) form a domain IV, binds dsDNA region.

Belongs to the DnaA family. In terms of assembly, oligomerizes as a right-handed, spiral filament on DNA at oriC.

Its subcellular location is the cytoplasm. In terms of biological role, plays an essential role in the initiation and regulation of chromosomal replication. ATP-DnaA binds to the origin of replication (oriC) to initiate formation of the DNA replication initiation complex once per cell cycle. Binds the DnaA box (a 9 base pair repeat at the origin) and separates the double-stranded (ds)DNA. Forms a right-handed helical filament on oriC DNA; dsDNA binds to the exterior of the filament while single-stranded (ss)DNA is stabiized in the filament's interior. The ATP-DnaA-oriC complex binds and stabilizes one strand of the AT-rich DNA unwinding element (DUE), permitting loading of DNA polymerase. After initiation quickly degrades to an ADP-DnaA complex that is not apt for DNA replication. Binds acidic phospholipids. In Escherichia coli (strain ATCC 8739 / DSM 1576 / NBRC 3972 / NCIMB 8545 / WDCM 00012 / Crooks), this protein is Chromosomal replication initiator protein DnaA.